Consider the following 404-residue polypeptide: Diaminopropionate ammonia-lyase (404 aa).

The residue at position 78 (Lys-78) is an N6-(pyridoxal phosphate)lysine.

This sequence belongs to the diaminopropionate ammonia-lyase family. In terms of assembly, homodimer. Requires pyridoxal 5'-phosphate as cofactor.

The enzyme catalyses (S)-2,3-diaminopropanoate + H2O + H(+) = pyruvate + 2 NH4(+). It catalyses the reaction (R)-2,3-diaminopropanoate + H2O + H(+) = pyruvate + 2 NH4(+). Competitively inhibited by L- and D-alanine. In terms of biological role, catalyzes the alpha,beta-elimination reaction of both L- and D-alpha,beta-diaminopropionate (DAP) to form pyruvate and ammonia. In vitro L- and D-isomers of serine are also degraded, though slowly; it is the only serine dehydratase which can eliminate an amino group at the beta-carbon position. In vivo L-, D- and a mixure of DL-DAP allow growth. DL-DAP is toxic in the absence of this enzyme, it may inhibit enzymes involved in the synthesis of pyruvate and aspartate, as well as amino acids derived from them. The sequence is that of Diaminopropionate ammonia-lyase (dpaL) from Salmonella typhimurium (strain LT2 / SGSC1412 / ATCC 700720).